Reading from the N-terminus, the 134-residue chain is Ribonuclease VapC1 (134 aa).

Residues 3–132 (YMLDTNIIIY…RITDLQWQDW (130 aa)) form the PINc domain. Mg(2+)-binding residues include Asp6 and Asp99.

Belongs to the PINc/VapC protein family. As to quaternary structure, forms a complex with VapB1. Mg(2+) serves as cofactor.

Its function is as follows. Toxic component of a type II toxin-antitoxin (TA) system. Upon expression in E.coli inhibits growth in liquid culture. Its toxic effect is neutralized by coexpression with antitoxin VapB1. Degrades RNA but not ss- or ds-DNA in vitro, degradation is inhibited by VapB1 antitoxin. This Haemophilus influenzae (strain R2866) protein is Ribonuclease VapC1.